Here is a 214-residue protein sequence, read N- to C-terminus: GTP-binding protein ypt3 (214 aa).

Position 17–24 (17–24 (GDSGVGKS)) interacts with GTP. The Effector region signature appears at 39 to 47 (SKSTIGVEF). Threonine 42 carries the phosphothreonine modification. GTP contacts are provided by residues 65 to 69 (DTAGQ) and 123 to 126 (NKTD). 2 S-geranylgeranyl cysteine lipidation sites follow: cysteine 213 and cysteine 214.

This sequence belongs to the small GTPase superfamily. Rab family.

It localises to the cell membrane. The protein resides in the endosome membrane. Its subcellular location is the golgi apparatus membrane. It is found in the cytoplasm. The protein localises to the nucleus. Has a role in retrograde traffricking of proteins from the endosome to the Golgi. Involved in the secretory pathway where it has a role in acid phosphatase secretion. The chain is GTP-binding protein ypt3 (ypt3) from Schizosaccharomyces pombe (strain 972 / ATCC 24843) (Fission yeast).